The sequence spans 158 residues: 6,7-dimethyl-8-ribityllumazine synthase (158 aa).

5-amino-6-(D-ribitylamino)uracil is bound by residues Phe22, 56–58 (ALE), and 80–82 (VVI). A (2S)-2-hydroxy-3-oxobutyl phosphate-binding site is contributed by 85-86 (ET). The Proton donor role is filled by His88. Asn113 serves as a coordination point for 5-amino-6-(D-ribitylamino)uracil. Arg127 serves as a coordination point for (2S)-2-hydroxy-3-oxobutyl phosphate.

Belongs to the DMRL synthase family.

The catalysed reaction is (2S)-2-hydroxy-3-oxobutyl phosphate + 5-amino-6-(D-ribitylamino)uracil = 6,7-dimethyl-8-(1-D-ribityl)lumazine + phosphate + 2 H2O + H(+). It participates in cofactor biosynthesis; riboflavin biosynthesis; riboflavin from 2-hydroxy-3-oxobutyl phosphate and 5-amino-6-(D-ribitylamino)uracil: step 1/2. Catalyzes the formation of 6,7-dimethyl-8-ribityllumazine by condensation of 5-amino-6-(D-ribitylamino)uracil with 3,4-dihydroxy-2-butanone 4-phosphate. This is the penultimate step in the biosynthesis of riboflavin. The sequence is that of 6,7-dimethyl-8-ribityllumazine synthase from Neisseria meningitidis serogroup C / serotype 2a (strain ATCC 700532 / DSM 15464 / FAM18).